A 534-amino-acid chain; its full sequence is Corneodesmosin (534 aa).

The signal sequence occupies residues M1–A32. Disordered stretches follow at residues F38–S252 and C396–G497. Low complexity-rich tracts occupy residues G64–S82, G107–A185, S200–P236, S397–S415, and P431–G446. A compositionally biased stretch (polar residues) spans G454–L472.

The protein resides in the secreted. Functionally, important for the epidermal barrier integrity. The polypeptide is Corneodesmosin (CDSN) (Macaca mulatta (Rhesus macaque)).